We begin with the raw amino-acid sequence, 204 residues long: Recombination protein RecR (204 aa).

A C4-type zinc finger spans residues 58 to 75 (CSVCQNVTDREEDPCSIC). A Toprim domain is found at 83-181 (TVICVVESPV…EVTKIARGIP (99 aa)).

It belongs to the RecR family.

Functionally, may play a role in DNA repair. It seems to be involved in an RecBC-independent recombinational process of DNA repair. It may act with RecF and RecO. The polypeptide is Recombination protein RecR (Chlorobium luteolum (strain DSM 273 / BCRC 81028 / 2530) (Pelodictyon luteolum)).